Here is a 333-residue protein sequence, read N- to C-terminus: Cell shape-determining protein Mbl (333 aa).

ATP-binding positions include 12–14, 156–158, 204–207, and 284–287; these read TAN, GGT, EDIK, and GGAL.

This sequence belongs to the FtsA/MreB family. As to quaternary structure, forms polymers. Forms a complex with MreB and MreBH. Interacts with MreC.

It is found in the cytoplasm. Forms membrane-associated dynamic filaments that are essential for cell shape determination. Acts by regulating cell wall synthesis and cell elongation, and thus cell shape. A feedback loop between cell geometry and Mbl localization may maintain elongated cell shape by targeting cell wall growth to regions of negative cell wall curvature. Filaments rotate around the cell circumference in concert with the cell wall synthesis enzymes. The process is driven by the cell wall synthesis machinery and does not depend on Mbl polymerization. Organizes peptidoglycan synthesis in the lateral cell wall. Also required for proper chromosome segregation. The protein is Cell shape-determining protein Mbl (mbl) of Bacillus subtilis (strain 168).